Consider the following 126-residue polypeptide: Large ribosomal subunit protein bL12 (126 aa).

This sequence belongs to the bacterial ribosomal protein bL12 family. As to quaternary structure, homodimer. Part of the ribosomal stalk of the 50S ribosomal subunit. Forms a multimeric L10(L12)X complex, where L10 forms an elongated spine to which 2 to 4 L12 dimers bind in a sequential fashion. Binds GTP-bound translation factors.

Its function is as follows. Forms part of the ribosomal stalk which helps the ribosome interact with GTP-bound translation factors. Is thus essential for accurate translation. In Rhizorhabdus wittichii (strain DSM 6014 / CCUG 31198 / JCM 15750 / NBRC 105917 / EY 4224 / RW1) (Sphingomonas wittichii), this protein is Large ribosomal subunit protein bL12.